We begin with the raw amino-acid sequence, 444 residues long: Ubiquitin carboxyl-terminal hydrolase MINDY-3 (444 aa).

Cys51 functions as the Nucleophile in the catalytic mechanism. Ser124 carries the post-translational modification Phosphoserine. Residue His286 is the Proton acceptor of the active site.

The protein belongs to the MINDY deubiquitinase family. FAM188 subfamily. In terms of assembly, interacts with COPS5.

It localises to the nucleus. It carries out the reaction Thiol-dependent hydrolysis of ester, thioester, amide, peptide and isopeptide bonds formed by the C-terminal Gly of ubiquitin (a 76-residue protein attached to proteins as an intracellular targeting signal).. In terms of biological role, hydrolase that can remove 'Lys-48'-linked conjugated ubiquitin from proteins. The polypeptide is Ubiquitin carboxyl-terminal hydrolase MINDY-3 (Mus musculus (Mouse)).